Consider the following 133-residue polypeptide: FPRL1 inhibitory protein (133 aa).

Positions 1 to 28 (MKKNITKTIIASTVIAAGLLTQTNDAKA) are cleaved as a signal peptide.

It belongs to the CHIPS/FLIPr family.

The protein localises to the secreted. Its function is as follows. May be involved in countering the first line of host defense mechanisms. Impairs the leukocyte response to FPRL1 agonists by binding directly to host FPRL1. Exerts, in vitro, anti-inflammatory activity by inhibiting calcium mobilization and cell migration toward chemoattractants. The chain is FPRL1 inhibitory protein (flr) from Staphylococcus aureus (strain Newman).